Here is a 383-residue protein sequence, read N- to C-terminus: S-(hydroxymethyl)glutathione dehydrogenase (383 aa).

Cys-51 is a Zn(2+) binding site. Residue His-52 participates in NAD(+) binding. Positions 73, 74, 103, 106, 109, 117, and 180 each coordinate Zn(2+). NAD(+) is bound by residues 205–210 (GAGCVG), Asp-229, and 298–300 (IGV).

The protein belongs to the zinc-containing alcohol dehydrogenase family. Class-III subfamily. Zn(2+) is required as a cofactor.

The catalysed reaction is a primary alcohol + NAD(+) = an aldehyde + NADH + H(+). It carries out the reaction a secondary alcohol + NAD(+) = a ketone + NADH + H(+). The enzyme catalyses S-(hydroxymethyl)glutathione + NADP(+) = S-formylglutathione + NADPH + H(+). It catalyses the reaction S-(hydroxymethyl)glutathione + NAD(+) = S-formylglutathione + NADH + H(+). The catalysed reaction is S-nitrosoglutathione + NADH + H(+) = S-(hydroxysulfenamide)glutathione + NAD(+). Its function is as follows. Oxidizes long-chain alcohols and, in the presence of glutathione, is able to oxidize formaldehyde. Also acts as a S-nitroso-glutathione reductase by catalyzing the NADH-dependent reduction of S-nitrosoglutathione, thereby regulating protein S-nitrosylation. In Aspergillus oryzae (strain ATCC 42149 / RIB 40) (Yellow koji mold), this protein is S-(hydroxymethyl)glutathione dehydrogenase (FDH1).